The primary structure comprises 152 residues: Large ribosomal subunit protein bL9 (152 aa).

This sequence belongs to the bacterial ribosomal protein bL9 family.

Its function is as follows. Binds to the 23S rRNA. In Mycobacterium bovis (strain ATCC BAA-935 / AF2122/97), this protein is Large ribosomal subunit protein bL9.